The primary structure comprises 298 residues: Probable deoxyhypusine synthase 2 (298 aa).

Lys259 serves as the catalytic Nucleophile.

The protein belongs to the deoxyhypusine synthase family. NAD(+) serves as cofactor.

The catalysed reaction is [eIF5A protein]-L-lysine + spermidine = [eIF5A protein]-deoxyhypusine + propane-1,3-diamine. The protein operates within protein modification; eIF5A hypusination. Functionally, catalyzes the NAD-dependent oxidative cleavage of spermidine and the subsequent transfer of the butylamine moiety of spermidine to the epsilon-amino group of a specific lysine residue of the eIF-5A precursor protein to form the intermediate deoxyhypusine residue. In Archaeoglobus fulgidus (strain ATCC 49558 / DSM 4304 / JCM 9628 / NBRC 100126 / VC-16), this protein is Probable deoxyhypusine synthase 2 (dys2).